Reading from the N-terminus, the 31-residue chain is Cytochrome b6-f complex subunit 6 (31 aa).

Residues 4 to 24 form a helical membrane-spanning segment; it reads VISYLSLLFISFLFALTLFIV.

It belongs to the PetL family. In terms of assembly, the 4 large subunits of the cytochrome b6-f complex are cytochrome b6, subunit IV (17 kDa polypeptide, PetD), cytochrome f and the Rieske protein, while the 4 small subunits are PetG, PetL, PetM and PetN. The complex functions as a dimer.

It is found in the plastid. Its subcellular location is the chloroplast thylakoid membrane. Its function is as follows. Component of the cytochrome b6-f complex, which mediates electron transfer between photosystem II (PSII) and photosystem I (PSI), cyclic electron flow around PSI, and state transitions. PetL is important for photoautotrophic growth as well as for electron transfer efficiency and stability of the cytochrome b6-f complex. This Chara vulgaris (Common stonewort) protein is Cytochrome b6-f complex subunit 6.